The sequence spans 838 residues: V-type proton ATPase 116 kDa subunit a 1 (838 aa).

The Cytoplasmic portion of the chain corresponds to 1-388; sequence MGELFRSEEM…DAYGIGTYRE (388 aa). 2 positions are modified to phosphothreonine: threonine 250 and threonine 360. Tyrosine 364 is modified (phosphotyrosine). The helical transmembrane segment at 389–407 threads the bilayer; that stretch reads INPAPYTVITFPFLFAVMF. Residues 408-409 lie on the Vacuolar side of the membrane; that stretch reads GD. Residues 410 to 426 form a helical membrane-spanning segment; that stretch reads FGHGILMTLFAVWMVLR. The Cytoplasmic segment spans residues 427–441; the sequence is ESRILSQKNENEMFS. A helical membrane pass occupies residues 442–471; the sequence is MVFSGRYIILLMGLFSIYTGLIYNDCFSKS. Over 472-535 the chain is Vacuolar; it reads LNIFGSSWSV…ATNKLTFLNS (64 aa). The chain crosses the membrane as a helical span at residues 536–555; it reads FKMKMSVILGIIHMLFGVSL. At 556–573 the chain is on the cytoplasmic side; the sequence is SLFNHIYFKKPLNIYFGF. Residues 574-594 traverse the membrane as a helical segment; sequence IPEIIFMSSLFGYLVILIFYK. Topologically, residues 595–639 are vacuolar; sequence WTAYDAHSSRNAPSLLIHFINMFLFSYPESGNAMLYSGQKGIQCF. Residues 640–659 traverse the membrane as a helical segment; sequence LIVVAMLCVPWMLLFKPLIL. Topologically, residues 660–725 are cytoplasmic; the sequence is RHQYLRKKHL…DTMVHQAIHT (66 aa). The chain crosses the membrane as a helical span at residues 726–750; it reads IEYCLGCISNTASYLRLWALSLAHA. At 751 to 771 the chain is on the vacuolar side; it reads QLSEVLWTMVIHIGLHVRSLA. The helical transmembrane segment at 772–810 threads the bilayer; sequence GGLGLFFIFAAFATLTVAILLIMEGLSAFLHALRLHWVE. At 811–838 the chain is on the cytoplasmic side; it reads FQNKFYTGTGFKFLPFSFEHIREGKFDE.

Belongs to the V-ATPase 116 kDa subunit family. V-ATPase is a heteromultimeric enzyme made up of two complexes: the ATP-hydrolytic V1 complex and the proton translocation V0 complex. The V1 complex consists of three catalytic AB heterodimers that form a heterohexamer, three peripheral stalks each consisting of EG heterodimers, one central rotor including subunits D and F, and the regulatory subunits C and H. The proton translocation complex V0 consists of the proton transport subunit a, a ring of proteolipid subunits c9c'', rotary subunit d, subunits e and f, and the accessory subunits ATP6AP1/Ac45 and ATP6AP2/PRR. Interacts with SPAAR. As to expression, expressed in brain (at protein level). Expressed in heart, kidney, liver, spleen, and to a lesser extent in brain.

The protein resides in the cytoplasmic vesicle. It localises to the clathrin-coated vesicle membrane. The protein localises to the secretory vesicle. It is found in the synaptic vesicle membrane. Its subcellular location is the melanosome. Its function is as follows. Subunit of the V0 complex of vacuolar(H+)-ATPase (V-ATPase), a multisubunit enzyme composed of a peripheral complex (V1) that hydrolyzes ATP and a membrane integral complex (V0) that translocates protons. V-ATPase is responsible for the acidification of various organelles, such as lysosomes, endosomes, the trans-Golgi network, and secretory granules, including synaptic vesicles. In certain cell types, can be exported to the plasma membrane, where it is involved in the acidification of the extracellular environment. Required for assembly and activity of the vacuolar ATPase. Through its action on compartment acidification, plays an essential role in neuronal development in terms of integrity and connectivity of neurons. The sequence is that of V-type proton ATPase 116 kDa subunit a 1 (Atp6v0a1) from Rattus norvegicus (Rat).